Reading from the N-terminus, the 307-residue chain is uncharacterized protein (307 aa).

The helical transmembrane segment at 12–34 (LLAFLLALIMIGSVFAYMLSGGS) threads the bilayer.

It localises to the membrane. This is an uncharacterized protein from Archaeoglobus fulgidus (strain ATCC 49558 / DSM 4304 / JCM 9628 / NBRC 100126 / VC-16).